A 630-amino-acid polypeptide reads, in one-letter code: Mannosyl-oligosaccharide 1,2-alpha-mannosidase IC (630 aa).

The Cytoplasmic segment spans residues 1–22 (MLMRKVPGFVPASPWGLRLPQK). Residues 23–43 (FLFLLFLSGLVTLCFGALFLL) form a helical; Signal-anchor for type II membrane protein membrane-spanning segment. Residues 44-630 (PHSSRLKRLF…DSSGRAWGRH (587 aa)) lie on the Lumenal side of the membrane. A disordered region spans residues 74-140 (PAREQEPPPN…ASRPGDEGVP (67 aa)). The span at 80–89 (PPPNPAPAAP) shows a compositional bias: pro residues. Over residues 102-113 (PRRRKGGLRRTR) the composition is skewed to basic residues. Residue S164 is modified to Phosphoserine. The N-linked (GlcNAc...) asparagine glycan is linked to N250. Cysteines 453 and 485 form a disulfide. Catalysis depends on E499, which acts as the Proton donor. Residue T610 participates in Ca(2+) binding. N-linked (GlcNAc...) asparagine glycosylation is present at N618.

Belongs to the glycosyl hydrolase 47 family. It depends on Ca(2+) as a cofactor. In terms of tissue distribution, expressed in most tissues with the exception of lung, muscle and pancreas. Highly expressed in placenta.

The protein localises to the golgi apparatus membrane. The enzyme catalyses N(4)-(alpha-D-Man-(1-&gt;2)-alpha-D-Man-(1-&gt;2)-alpha-D-Man-(1-&gt;3)-[alpha-D-Man-(1-&gt;2)-alpha-D-Man-(1-&gt;3)-[alpha-D-Man-(1-&gt;2)-alpha-D-Man-(1-&gt;6)]-alpha-D-Man-(1-&gt;6)]-beta-D-Man-(1-&gt;4)-beta-D-GlcNAc-(1-&gt;4)-beta-D-GlcNAc)-L-asparaginyl-[protein] (N-glucan mannose isomer 9A1,2,3B1,2,3) + 4 H2O = N(4)-(alpha-D-Man-(1-&gt;3)-[alpha-D-Man-(1-&gt;3)-[alpha-D-Man-(1-&gt;6)]-alpha-D-Man-(1-&gt;6)]-beta-D-Man-(1-&gt;4)-beta-D-GlcNAc-(1-&gt;4)-beta-D-GlcNAc)-L-asparaginyl-[protein] (N-glucan mannose isomer 5A1,2) + 4 beta-D-mannose. The catalysed reaction is N(4)-(alpha-D-Man-(1-&gt;2)-alpha-D-Man-(1-&gt;2)-alpha-D-Man-(1-&gt;3)-[alpha-D-Man-(1-&gt;3)-[alpha-D-Man-(1-&gt;2)-alpha-D-Man-(1-&gt;6)]-alpha-D-Man-(1-&gt;6)]-beta-D-Man-(1-&gt;4)-beta-D-GlcNAc-(1-&gt;4)-beta-D-GlcNAc)-L-asparaginyl-[protein] (N-glucan mannose isomer 8A1,2,3B1,3) + 3 H2O = N(4)-(alpha-D-Man-(1-&gt;3)-[alpha-D-Man-(1-&gt;3)-[alpha-D-Man-(1-&gt;6)]-alpha-D-Man-(1-&gt;6)]-beta-D-Man-(1-&gt;4)-beta-D-GlcNAc-(1-&gt;4)-beta-D-GlcNAc)-L-asparaginyl-[protein] (N-glucan mannose isomer 5A1,2) + 3 beta-D-mannose. Its pathway is protein modification; protein glycosylation. With respect to regulation, inhibited by both 1-deoxymannojirimycin and kifunensine. Its function is as follows. Involved in the maturation of Asn-linked oligosaccharides. Trim alpha-1,2-linked mannose residues from Man(9)GlcNAc(2) to produce first Man(8)GlcNAc(2) then Man(6)GlcNAc and a small amount of Man(5)GlcNAc. This Homo sapiens (Human) protein is Mannosyl-oligosaccharide 1,2-alpha-mannosidase IC (MAN1C1).